Here is a 256-residue protein sequence, read N- to C-terminus: Acetyl-coenzyme A carboxylase carboxyl transferase subunit alpha (256 aa).

The CoA carboxyltransferase C-terminal domain maps to 1–236; the sequence is MTDVARILKE…KEHLKTEINQ (236 aa).

This sequence belongs to the AccA family. In terms of assembly, acetyl-CoA carboxylase is a heterohexamer composed of biotin carboxyl carrier protein (AccB), biotin carboxylase (AccC) and two subunits each of ACCase subunit alpha (AccA) and ACCase subunit beta (AccD).

It localises to the cytoplasm. It carries out the reaction N(6)-carboxybiotinyl-L-lysyl-[protein] + acetyl-CoA = N(6)-biotinyl-L-lysyl-[protein] + malonyl-CoA. It participates in lipid metabolism; malonyl-CoA biosynthesis; malonyl-CoA from acetyl-CoA: step 1/1. In terms of biological role, component of the acetyl coenzyme A carboxylase (ACC) complex. First, biotin carboxylase catalyzes the carboxylation of biotin on its carrier protein (BCCP) and then the CO(2) group is transferred by the carboxyltransferase to acetyl-CoA to form malonyl-CoA. This is Acetyl-coenzyme A carboxylase carboxyl transferase subunit alpha from Streptococcus uberis (strain ATCC BAA-854 / 0140J).